The sequence spans 91 residues: MTDSQKEAPKIEFPCDYPLKVIGVAGPDFQEVVATIVRAHAPEFDASSIDALDSRNGKYLSLRFSIQAQSEEHIRRLFLDLKAHSAVQMVL.

The protein belongs to the UPF0250 family.

This is UPF0250 protein HCH_05838 from Hahella chejuensis (strain KCTC 2396).